A 598-amino-acid polypeptide reads, in one-letter code: 2-succinyl-5-enolpyruvyl-6-hydroxy-3-cyclohexene-1-carboxylate synthase (598 aa).

Belongs to the TPP enzyme family. MenD subfamily. As to quaternary structure, homodimer. Mg(2+) is required as a cofactor. Mn(2+) serves as cofactor. Requires thiamine diphosphate as cofactor.

It carries out the reaction isochorismate + 2-oxoglutarate + H(+) = 5-enolpyruvoyl-6-hydroxy-2-succinyl-cyclohex-3-ene-1-carboxylate + CO2. It functions in the pathway quinol/quinone metabolism; 1,4-dihydroxy-2-naphthoate biosynthesis; 1,4-dihydroxy-2-naphthoate from chorismate: step 2/7. The protein operates within cofactor biosynthesis; phylloquinone biosynthesis. Its function is as follows. Catalyzes the thiamine diphosphate-dependent decarboxylation of 2-oxoglutarate and the subsequent addition of the resulting succinic semialdehyde-thiamine pyrophosphate anion to isochorismate to yield 2-succinyl-5-enolpyruvyl-6-hydroxy-3-cyclohexene-1-carboxylate (SEPHCHC). In Prochlorococcus marinus (strain NATL1A), this protein is 2-succinyl-5-enolpyruvyl-6-hydroxy-3-cyclohexene-1-carboxylate synthase.